A 119-amino-acid chain; its full sequence is Ribonuclease P protein component (119 aa).

It belongs to the RnpA family. In terms of assembly, consists of a catalytic RNA component (M1 or rnpB) and a protein subunit.

It carries out the reaction Endonucleolytic cleavage of RNA, removing 5'-extranucleotides from tRNA precursor.. RNaseP catalyzes the removal of the 5'-leader sequence from pre-tRNA to produce the mature 5'-terminus. It can also cleave other RNA substrates such as 4.5S RNA. The protein component plays an auxiliary but essential role in vivo by binding to the 5'-leader sequence and broadening the substrate specificity of the ribozyme. The sequence is that of Ribonuclease P protein component from Streptococcus equi subsp. equi (strain 4047).